The sequence spans 194 residues: uncharacterized protein (194 aa).

A helical membrane pass occupies residues D17–H37.

Belongs to the IIV-6 307L family.

The protein resides in the membrane. This is an uncharacterized protein from Invertebrate iridescent virus 3 (IIV-3).